The chain runs to 365 residues: Peptide chain release factor 2 (365 aa).

Glutamine 251 carries the N5-methylglutamine modification.

Belongs to the prokaryotic/mitochondrial release factor family. Methylated by PrmC. Methylation increases the termination efficiency of RF2.

The protein localises to the cytoplasm. In terms of biological role, peptide chain release factor 2 directs the termination of translation in response to the peptide chain termination codons UGA and UAA. The chain is Peptide chain release factor 2 from Campylobacter jejuni subsp. jejuni serotype O:2 (strain ATCC 700819 / NCTC 11168).